The chain runs to 730 residues: Nitrogen fixation protein FixI (730 aa).

Over 1–101 (MHVTRDFSHY…AEVAEVAESR (101 aa)) the chain is Cytoplasmic. The 67-residue stretch at 19-85 (KHIDLAVEGV…RLEELGYKAY (67 aa)) folds into the HMA domain. Residues cysteine 30 and cysteine 33 each contribute to the a metal cation site. The chain crosses the membrane as a helical span at residues 102 to 123 (FLLRCLGVAAFATMNVMMLSIP). At 124 to 138 (VWSGNVSDMLPEQRD) the chain is on the extracellular side. The chain crosses the membrane as a helical span at residues 139–162 (FFHWLSALIALPAAAYAGQPFFRS). Residues 163–168 (AWRALS) lie on the Cytoplasmic side of the membrane. Residues 169 to 190 (AKTTNMDVPISIGVILALGMSV) form a helical membrane-spanning segment. Residues 191-202 (VETIHHAEHAYF) are Extracellular-facing. The chain crosses the membrane as a helical span at residues 203–223 (DAAIMLLTFLLVGRFLDQNMR). Over 224-352 (RRTRAVAGNL…RSRYMRLADR (129 aa)) the chain is Cytoplasmic. Residues 353–375 (ASRLYAPVVHATALITILGWVIA) traverse the membrane as a helical segment. At 376 to 382 (GASWHDA) the chain is on the extracellular side. The chain crosses the membrane as a helical span at residues 383 to 400 (IVTGVAVLIITCPCALGL). At 401–676 (AIPTVQTVAS…DSARKALHLM (276 aa)) the chain is on the cytoplasmic side. Aspartate 438 (4-aspartylphosphate intermediate) is an active-site residue. Mg(2+)-binding residues include aspartate 622 and aspartate 626. Residues 677-696 (RQNLWLAIGYNVLAVPVAIS) form a helical membrane-spanning segment. The Extracellular portion of the chain corresponds to 697-701 (GVVTP). A helical membrane pass occupies residues 702 to 720 (LIAAAAMSGSSILVMLNSL). The Cytoplasmic segment spans residues 721–730 (RARSDSREIV).

This sequence belongs to the cation transport ATPase (P-type) (TC 3.A.3) family. Type IB subfamily.

The protein localises to the cell membrane. It catalyses the reaction ATP + H2O = ADP + phosphate + H(+). FixI is a pump of a specific cation involved in symbiotic nitrogen fixation. The four proteins FixG, FixH, FixI, and FixS may participate in a membrane-bound complex coupling the FixI cation pump with a redox process catalyzed by FixG. The polypeptide is Nitrogen fixation protein FixI (fixI) (Bradyrhizobium diazoefficiens (strain JCM 10833 / BCRC 13528 / IAM 13628 / NBRC 14792 / USDA 110)).